A 35-amino-acid polypeptide reads, in one-letter code: Sperm-specific protein Phi-1 (35 aa).

2 stretches are compositionally biased toward basic residues: residues 1 to 17 (PSPT…RSRS) and 25 to 35 (AAKRAKSKTAK). Residues 1 to 35 (PSPTRRSKSRSKSRSRSRSASAGKAAKRAKSKTAK) form a disordered region.

In terms of tissue distribution, sperm.

It localises to the nucleus. It is found in the chromosome. In terms of biological role, involved in nuclear basic protein transition: histones are replaced by spermatid specific proteins which are themselves replaced by protamines in late spermatids. The polypeptide is Sperm-specific protein Phi-1 (Mytilus californianus (California mussel)).